Here is a 259-residue protein sequence, read N- to C-terminus: Phosphate import ATP-binding protein PstB (259 aa).

Residues 2-248 (GQRIDVNHEN…ITMFNNPQNE (247 aa)) form the ABC transporter domain. 37 to 44 (GPSGCGKS) serves as a coordination point for ATP.

The protein belongs to the ABC transporter superfamily. Phosphate importer (TC 3.A.1.7) family. As to quaternary structure, the complex is composed of two ATP-binding proteins (PstB), two transmembrane proteins (PstC and PstA) and a solute-binding protein (PstS).

The protein localises to the cell membrane. It catalyses the reaction phosphate(out) + ATP + H2O = ADP + 2 phosphate(in) + H(+). Its function is as follows. Part of the ABC transporter complex PstSACB involved in phosphate import. Responsible for energy coupling to the transport system. The protein is Phosphate import ATP-binding protein PstB of Bifidobacterium longum (strain NCC 2705).